We begin with the raw amino-acid sequence, 139 residues long: Arsenate reductase (139 aa).

Catalysis depends on nucleophile residues Cys-10, Cys-82, and Cys-89. Disulfide bonds link Cys-10–Cys-82 and Cys-82–Cys-89.

The protein belongs to the low molecular weight phosphotyrosine protein phosphatase family. Thioredoxin-coupled ArsC subfamily. In terms of assembly, monomer.

The protein resides in the cytoplasm. The enzyme catalyses arsenate + [thioredoxin]-dithiol + H(+) = arsenite + [thioredoxin]-disulfide + H2O. Its activity is regulated as follows. Activity is potassium and sulfate-independent. In terms of biological role, catalyzes the reduction of arsenate [As(V)] to arsenite [As(III)]. In vitro, can dephosphorylate para-nitrophenyl phosphate (pNPP). The sequence is that of Arsenate reductase from Bacillus subtilis (strain 168).